Reading from the N-terminus, the 108-residue chain is MTTGQEAEQLARTYLEKQGLEYVAHNVRYPFGELDLVMRHQDFWVFVEVKFRTNTQFGGALQAIRPKQIQRIRKAANHYLQLNKINAPCRFDVLAIDGLQINWLQGCF.

The protein belongs to the UPF0102 family.

This chain is UPF0102 protein Sden_0272, found in Shewanella denitrificans (strain OS217 / ATCC BAA-1090 / DSM 15013).